A 141-amino-acid polypeptide reads, in one-letter code: Myosin regulatory light chain cdc4 (141 aa).

A phosphoserine mark is found at Ser2 and Ser6. EF-hand domains lie at 3–38 (TDDS…CGQN), 74–109 (GDPE…LGEK), and 109–141 (KLSN…ILAN). Residues Asp87, Asp89, Thr91, Met93, and Glu98 each coordinate Ca(2+).

As to quaternary structure, binds to myosin II chains myo2 and myo3. Interacts with vps27 and a PI 4-kinase pik1. Phosphorylated on either Ser-2 or Ser-6 but not both. Phosphorylation is not essential for the function of the protein.

Its subcellular location is the cytoplasm. In terms of biological role, involved in cytokinesis. Required for the formation and function of the contractile ring. This is Myosin regulatory light chain cdc4 (cdc4) from Schizosaccharomyces pombe (strain 972 / ATCC 24843) (Fission yeast).